We begin with the raw amino-acid sequence, 37 residues long: uncharacterized protein (37 aa).

Residues 17–37 traverse the membrane as a helical segment; the sequence is TFVLIVVLFILLIIVGAAFIC.

This sequence belongs to the SscA family.

The protein localises to the membrane. This is an uncharacterized protein from Bacillus subtilis (strain 168).